The sequence spans 324 residues: Geranylgeranyl pyrophosphate synthase dpmpD (324 aa).

The isopentenyl diphosphate site is built by lysine 50, arginine 53, and histidine 82. Mg(2+) contacts are provided by aspartate 89 and aspartate 93. Arginine 98 is a dimethylallyl diphosphate binding site. Residue arginine 99 coordinates isopentenyl diphosphate. Dimethylallyl diphosphate-binding residues include lysine 176, threonine 177, and glutamine 210. Aspartate 213 contributes to the Mg(2+) binding site. 3 residues coordinate dimethylallyl diphosphate: asparagine 217, lysine 227, and lysine 237.

Belongs to the FPP/GGPP synthase family. It depends on Mg(2+) as a cofactor.

It catalyses the reaction isopentenyl diphosphate + dimethylallyl diphosphate = (2E)-geranyl diphosphate + diphosphate. It carries out the reaction isopentenyl diphosphate + (2E)-geranyl diphosphate = (2E,6E)-farnesyl diphosphate + diphosphate. The enzyme catalyses isopentenyl diphosphate + (2E,6E)-farnesyl diphosphate = (2E,6E,10E)-geranylgeranyl diphosphate + diphosphate. The protein operates within secondary metabolite biosynthesis; terpenoid biosynthesis. Geranylgeranyl pyrophosphate synthase; part of the gene cluster that mediates the biosynthesis of diterpenoid pyrones. The first step of the pathway is the synthesis of the alpha-pyrone moiety by the polyketide synthase dpmpA via condensation of one acetyl-CoA starter unit with 3 malonyl-CoA units and 2 methylations. The alpha-pyrone is then combined with geranylgeranyl pyrophosphate (GGPP) formed by the GGPP synthase dpmpD through the action of the prenyltransferase dpmpC to yield a linear alpha-pyrone diterpenoid. Subsequent steps in the diterpenoid pyrone biosynthetic pathway involve the decalin core formation, which is initiated by the epoxidation of the C10-C11 olefin by the FAD-dependent oxidoreductase dpmpE, and is followed by a cyclization cascade catalyzed by the terpene cyclase dpmpB. The short chain dehydrogenase/reductase dpmpG then oxidizes the 8S hydroxy group to a ketone and the short chain dehydrogenase/reductase dpmpH reduces the ketone to the 8R hydroxy group to yield higginsianin B. Higginsianin B is further methylated by the methyltransferase dpmpI to produce the intermediate named FDDP B. The cytochrome P450 monooxygenase dpmpJ then oxidizes the C-26 methyl to primary alcohol, producing the final diterpenoid pyrone with a C-26 primary alcohol on the gamma-pyrone moiety named FDDP C. This is Geranylgeranyl pyrophosphate synthase dpmpD from Macrophomina phaseolina (strain MS6) (Charcoal rot fungus).